The chain runs to 120 residues: Ribonuclease P protein component (120 aa).

Belongs to the RnpA family. Consists of a catalytic RNA component (M1 or rnpB) and a protein subunit.

The enzyme catalyses Endonucleolytic cleavage of RNA, removing 5'-extranucleotides from tRNA precursor.. In terms of biological role, RNaseP catalyzes the removal of the 5'-leader sequence from pre-tRNA to produce the mature 5'-terminus. It can also cleave other RNA substrates such as 4.5S RNA. The protein component plays an auxiliary but essential role in vivo by binding to the 5'-leader sequence and broadening the substrate specificity of the ribozyme. This Dehalococcoides mccartyi (strain CBDB1) protein is Ribonuclease P protein component.